The following is a 455-amino-acid chain: Bifunctional protein GlmU (455 aa).

Residues 1 to 228 (MTQPLHVIIL…AQEAEGANDP (228 aa)) form a pyrophosphorylase region. UDP-N-acetyl-alpha-D-glucosamine contacts are provided by residues 10 to 13 (LAAG), Lys24, Gln76, 81 to 82 (GT), 103 to 105 (YGD), Gly138, Glu153, Asn168, and Asn226. Position 105 (Asp105) interacts with Mg(2+). Asn226 serves as a coordination point for Mg(2+). Residues 229 to 249 (WQLSQLERAWQRRAVRALCAQ) form a linker region. The segment at 250-455 (GARVRDPARL…DGWKRPLKKS (206 aa)) is N-acetyltransferase. 2 residues coordinate UDP-N-acetyl-alpha-D-glucosamine: Arg332 and Lys350. His362 (proton acceptor) is an active-site residue. Tyr365 and Asn376 together coordinate UDP-N-acetyl-alpha-D-glucosamine. Residues Ala379, 385–386 (NY), Ser404, Ala422, and Arg439 each bind acetyl-CoA.

The protein in the N-terminal section; belongs to the N-acetylglucosamine-1-phosphate uridyltransferase family. In the C-terminal section; belongs to the transferase hexapeptide repeat family. As to quaternary structure, homotrimer. Mg(2+) is required as a cofactor.

Its subcellular location is the cytoplasm. The catalysed reaction is alpha-D-glucosamine 1-phosphate + acetyl-CoA = N-acetyl-alpha-D-glucosamine 1-phosphate + CoA + H(+). It catalyses the reaction N-acetyl-alpha-D-glucosamine 1-phosphate + UTP + H(+) = UDP-N-acetyl-alpha-D-glucosamine + diphosphate. It functions in the pathway nucleotide-sugar biosynthesis; UDP-N-acetyl-alpha-D-glucosamine biosynthesis; N-acetyl-alpha-D-glucosamine 1-phosphate from alpha-D-glucosamine 6-phosphate (route II): step 2/2. It participates in nucleotide-sugar biosynthesis; UDP-N-acetyl-alpha-D-glucosamine biosynthesis; UDP-N-acetyl-alpha-D-glucosamine from N-acetyl-alpha-D-glucosamine 1-phosphate: step 1/1. The protein operates within bacterial outer membrane biogenesis; LPS lipid A biosynthesis. In terms of biological role, catalyzes the last two sequential reactions in the de novo biosynthetic pathway for UDP-N-acetylglucosamine (UDP-GlcNAc). The C-terminal domain catalyzes the transfer of acetyl group from acetyl coenzyme A to glucosamine-1-phosphate (GlcN-1-P) to produce N-acetylglucosamine-1-phosphate (GlcNAc-1-P), which is converted into UDP-GlcNAc by the transfer of uridine 5-monophosphate (from uridine 5-triphosphate), a reaction catalyzed by the N-terminal domain. In Stenotrophomonas maltophilia (strain R551-3), this protein is Bifunctional protein GlmU.